Reading from the N-terminus, the 508-residue chain is Phenylalanine--tRNA ligase alpha subunit (508 aa).

An N-acetylalanine modification is found at alanine 2. Serine 193 and serine 301 each carry phosphoserine. The residue at position 311 (lysine 311) is an N6-acetyllysine. Residues threonine 329, 372–374 (QIE), and tyrosine 412 each bind L-phenylalanine. Residue glutamate 414 coordinates Mg(2+). L-phenylalanine is bound at residue phenylalanine 438.

The protein belongs to the class-II aminoacyl-tRNA synthetase family. Phe-tRNA synthetase alpha subunit type 2 subfamily. As to quaternary structure, heterotetramer; dimer of two heterodimers formed by FARSA and FARSB. Mg(2+) is required as a cofactor.

Its subcellular location is the cytoplasm. The enzyme catalyses tRNA(Phe) + L-phenylalanine + ATP = L-phenylalanyl-tRNA(Phe) + AMP + diphosphate + H(+). The chain is Phenylalanine--tRNA ligase alpha subunit (Farsa) from Rattus norvegicus (Rat).